A 180-amino-acid polypeptide reads, in one-letter code: Probable DNA-directed RNA polymerase subunit delta (180 aa).

Positions 14 to 81 constitute an HTH HARE-type domain; sequence LSMIEVARAI…GHNVWALRSW (68 aa). Residues 89–180 form a disordered region; sequence EEVNHPEDEE…HQDDLDDDDE (92 aa). The span at 115–163 shows a compositional bias: acidic residues; sequence DSDDDDIIDYDSDDPEDEDLDVDEEDTNEDDYSDDDLDDADDNELDDGI.

It belongs to the RpoE family. As to quaternary structure, RNAP is composed of a core of 2 alpha, a beta and a beta' subunits. The core is associated with a delta subunit and one of several sigma factors.

In terms of biological role, participates in both the initiation and recycling phases of transcription. In the presence of the delta subunit, RNAP displays an increased specificity of transcription, a decreased affinity for nucleic acids, and an increased efficiency of RNA synthesis because of enhanced recycling. The chain is Probable DNA-directed RNA polymerase subunit delta from Lactobacillus johnsonii (strain CNCM I-12250 / La1 / NCC 533).